Here is a 549-residue protein sequence, read N- to C-terminus: 4-hydroxybutyrate--CoA ligase 2 (549 aa).

Residues 195–203, 336–341, Asp425, and Arg440 each bind ATP; these read TSGTTGLPK and ETYGPH. Residues 448–450, Lys506, and 514–516 each bind CoA; these read GGE and CPK. An ATP-binding site is contributed by Lys530.

Belongs to the ATP-dependent AMP-binding enzyme family. The cofactor is Mg(2+). Mn(2+) serves as cofactor.

It carries out the reaction 4-hydroxybutanoate + ATP + CoA = 4-hydroxybutanoyl-CoA + AMP + diphosphate. The catalysed reaction is acetate + ATP + CoA = acetyl-CoA + AMP + diphosphate. It catalyses the reaction propanoate + ATP + CoA = propanoyl-CoA + AMP + diphosphate. The enzyme catalyses a medium-chain fatty acid + ATP + CoA = a medium-chain fatty acyl-CoA + AMP + diphosphate. Its function is as follows. Catalyzes the ligation of coenzyme A (CoA) to 4-hydroxybutyrate (4HB). It can also use butyrate, valerate, propionate, acetate and 3-hydroxybutyrate (3HB) as substrates. This Metallosphaera sedula (strain ATCC 51363 / DSM 5348 / JCM 9185 / NBRC 15509 / TH2) protein is 4-hydroxybutyrate--CoA ligase 2.